Reading from the N-terminus, the 663-residue chain is UvrABC system protein B (663 aa).

One can recognise a Helicase ATP-binding domain in the interval 31–418 (DNIEGGEKAQ…TDTVVEQIIR (388 aa)). 44 to 51 (GATGTGKT) provides a ligand contact to ATP. Positions 97-120 (YYDYYQPEAYVPSSDTYIEKDSSV) match the Beta-hairpin motif. A Helicase C-terminal domain is found at 435 to 601 (QMDDLLGEIN…TIKKEIRDLI (167 aa)). The UVR domain occupies 627–662 (QAEIKALQKQMQEAAELLDFELAAQIRDVILKLKAI).

Belongs to the UvrB family. Forms a heterotetramer with UvrA during the search for lesions. Interacts with UvrC in an incision complex.

The protein resides in the cytoplasm. Functionally, the UvrABC repair system catalyzes the recognition and processing of DNA lesions. A damage recognition complex composed of 2 UvrA and 2 UvrB subunits scans DNA for abnormalities. Upon binding of the UvrA(2)B(2) complex to a putative damaged site, the DNA wraps around one UvrB monomer. DNA wrap is dependent on ATP binding by UvrB and probably causes local melting of the DNA helix, facilitating insertion of UvrB beta-hairpin between the DNA strands. Then UvrB probes one DNA strand for the presence of a lesion. If a lesion is found the UvrA subunits dissociate and the UvrB-DNA preincision complex is formed. This complex is subsequently bound by UvrC and the second UvrB is released. If no lesion is found, the DNA wraps around the other UvrB subunit that will check the other stand for damage. This is UvrABC system protein B from Streptococcus agalactiae serotype Ia (strain ATCC 27591 / A909 / CDC SS700).